The primary structure comprises 360 residues: Phospho-N-acetylmuramoyl-pentapeptide-transferase (360 aa).

10 consecutive transmembrane segments (helical) span residues 27–47 (IVSLLTALVISLWMGPHMIAW), 73–93 (TMGGVMILVAIIVSVLMWANL), 94–114 (SNPYVWCVLLVLAGYGAVGFV), 132–152 (WKYFWQSVIALVVAFTMYSIG), 168–188 (VMPQLGLLYVALAYFVIVGTS), 199–219 (GLAIMPTVFVAAGFALVAWAT), 236–256 (ASELVIVCTAIVGAGLGFLWF), 263–283 (VFMGDVGSLALGGALGTIAVL), 288–308 (FLLVIMGGVFVVETLSVILQV), and 338–358 (VIVRFWIISLMLVLIGLATLK).

Belongs to the glycosyltransferase 4 family. MraY subfamily. Requires Mg(2+) as cofactor.

It localises to the cell inner membrane. It carries out the reaction UDP-N-acetyl-alpha-D-muramoyl-L-alanyl-gamma-D-glutamyl-meso-2,6-diaminopimeloyl-D-alanyl-D-alanine + di-trans,octa-cis-undecaprenyl phosphate = di-trans,octa-cis-undecaprenyl diphospho-N-acetyl-alpha-D-muramoyl-L-alanyl-D-glutamyl-meso-2,6-diaminopimeloyl-D-alanyl-D-alanine + UMP. It functions in the pathway cell wall biogenesis; peptidoglycan biosynthesis. Functionally, catalyzes the initial step of the lipid cycle reactions in the biosynthesis of the cell wall peptidoglycan: transfers peptidoglycan precursor phospho-MurNAc-pentapeptide from UDP-MurNAc-pentapeptide onto the lipid carrier undecaprenyl phosphate, yielding undecaprenyl-pyrophosphoryl-MurNAc-pentapeptide, known as lipid I. The polypeptide is Phospho-N-acetylmuramoyl-pentapeptide-transferase (Pectobacterium atrosepticum (strain SCRI 1043 / ATCC BAA-672) (Erwinia carotovora subsp. atroseptica)).